Reading from the N-terminus, the 125-residue chain is Small ribosomal subunit protein bS6 (125 aa).

Positions 101-125 (PMMKEEKAKNLLAPQSDAAEPTAAA) are disordered.

The protein belongs to the bacterial ribosomal protein bS6 family.

Its function is as follows. Binds together with bS18 to 16S ribosomal RNA. This chain is Small ribosomal subunit protein bS6, found in Laribacter hongkongensis (strain HLHK9).